Consider the following 226-residue polypeptide: ATP synthase F(0) complex subunit a (226 aa).

6 helical membrane passes run 12-32 (PTMMGLPIVILIIMFPSILFP), 68-88 (WTLMLMSLILFIGSTNLLGLL), 97-117 (QLSMNLGMAIPLWAGTVFMGF), 135-155 (IFLIPMLVIIETISLFIQPMA), 164-184 (ITAGHLLIHLIGGATLALMDI), and 189-209 (ALITFIILILLTILEFAVAMI).

This sequence belongs to the ATPase A chain family. In terms of assembly, component of the ATP synthase complex composed at least of ATP5F1A/subunit alpha, ATP5F1B/subunit beta, ATP5MC1/subunit c (homooctomer), MT-ATP6/subunit a, MT-ATP8/subunit 8, ATP5ME/subunit e, ATP5MF/subunit f, ATP5MG/subunit g, ATP5MK/subunit k, ATP5MJ/subunit j, ATP5F1C/subunit gamma, ATP5F1D/subunit delta, ATP5F1E/subunit epsilon, ATP5PF/subunit F6, ATP5PB/subunit b, ATP5PD/subunit d, ATP5PO/subunit OSCP. ATP synthase complex consists of a soluble F(1) head domain (subunits alpha(3) and beta(3)) - the catalytic core - and a membrane F(0) domain - the membrane proton channel (subunits c, a, 8, e, f, g, k and j). These two domains are linked by a central stalk (subunits gamma, delta, and epsilon) rotating inside the F1 region and a stationary peripheral stalk (subunits F6, b, d, and OSCP). Interacts with DNAJC30; interaction is direct.

It localises to the mitochondrion inner membrane. It catalyses the reaction H(+)(in) = H(+)(out). Its function is as follows. Subunit a, of the mitochondrial membrane ATP synthase complex (F(1)F(0) ATP synthase or Complex V) that produces ATP from ADP in the presence of a proton gradient across the membrane which is generated by electron transport complexes of the respiratory chain. ATP synthase complex consist of a soluble F(1) head domain - the catalytic core - and a membrane F(1) domain - the membrane proton channel. These two domains are linked by a central stalk rotating inside the F(1) region and a stationary peripheral stalk. During catalysis, ATP synthesis in the catalytic domain of F(1) is coupled via a rotary mechanism of the central stalk subunits to proton translocation. With the subunit c (ATP5MC1), forms the proton-conducting channel in the F(0) domain, that contains two crucial half-channels (inlet and outlet) that facilitate proton movement from the mitochondrial intermembrane space (IMS) into the matrix. Protons are taken up via the inlet half-channel and released through the outlet half-channel, following a Grotthuss mechanism. This chain is ATP synthase F(0) complex subunit a, found in Equus asinus (Donkey).